Here is a 365-residue protein sequence, read N- to C-terminus: DNA replication and repair protein RecF (365 aa).

30-37 (GDNGEGKT) is an ATP binding site.

Belongs to the RecF family.

It is found in the cytoplasm. Its function is as follows. The RecF protein is involved in DNA metabolism; it is required for DNA replication and normal SOS inducibility. RecF binds preferentially to single-stranded, linear DNA. It also seems to bind ATP. This Leptospira interrogans serogroup Icterohaemorrhagiae serovar copenhageni (strain Fiocruz L1-130) protein is DNA replication and repair protein RecF.